The following is a 109-amino-acid chain: Large ribosomal subunit protein uL22 (109 aa).

It belongs to the universal ribosomal protein uL22 family. Part of the 50S ribosomal subunit.

This protein binds specifically to 23S rRNA; its binding is stimulated by other ribosomal proteins, e.g. L4, L17, and L20. It is important during the early stages of 50S assembly. It makes multiple contacts with different domains of the 23S rRNA in the assembled 50S subunit and ribosome. Its function is as follows. The globular domain of the protein is located near the polypeptide exit tunnel on the outside of the subunit, while an extended beta-hairpin is found that lines the wall of the exit tunnel in the center of the 70S ribosome. This is Large ribosomal subunit protein uL22 from Laribacter hongkongensis (strain HLHK9).